Here is a 633-residue protein sequence, read N- to C-terminus: ATP-dependent zinc metalloprotease FtsH (633 aa).

Over 1-19 (MTPSNEPGKQDQIPQPGPT) the chain is Cytoplasmic. A helical membrane pass occupies residues 20 to 40 (IPNQYSFLWLSAAIFLMFLWL). Residues 41–133 (QGNNQQQQQE…SRSGRPWWQE (93 aa)) lie on the Periplasmic side of the membrane. A helical membrane pass occupies residues 134 to 154 (LILGFLPWILLLALMFWFWGA). Residues 155-633 (AQKRMTQGGG…LEEARSRETA (479 aa)) lie on the Cytoplasmic side of the membrane. 226-233 (GPPGTGKT) is an ATP binding site. H447 provides a ligand contact to Zn(2+). The active site involves E448. 2 residues coordinate Zn(2+): H451 and D523.

It in the central section; belongs to the AAA ATPase family. The protein in the C-terminal section; belongs to the peptidase M41 family. In terms of assembly, homohexamer. Zn(2+) is required as a cofactor.

Its subcellular location is the cell inner membrane. Acts as a processive, ATP-dependent zinc metallopeptidase for both cytoplasmic and membrane proteins. Plays a role in the quality control of integral membrane proteins. The chain is ATP-dependent zinc metalloprotease FtsH from Marinobacter nauticus (strain ATCC 700491 / DSM 11845 / VT8) (Marinobacter aquaeolei).